The sequence spans 321 residues: Beta-ketoacyl-[acyl-carrier-protein] synthase III (321 aa).

Active-site residues include C114 and H248. Residues 249–253 (QANKR) form an ACP-binding region. N278 is an active-site residue.

This sequence belongs to the thiolase-like superfamily. FabH family. In terms of assembly, homodimer.

The protein localises to the cytoplasm. It carries out the reaction malonyl-[ACP] + acetyl-CoA + H(+) = 3-oxobutanoyl-[ACP] + CO2 + CoA. It participates in lipid metabolism; fatty acid biosynthesis. Catalyzes the condensation reaction of fatty acid synthesis by the addition to an acyl acceptor of two carbons from malonyl-ACP. Catalyzes the first condensation reaction which initiates fatty acid synthesis and may therefore play a role in governing the total rate of fatty acid production. Possesses both acetoacetyl-ACP synthase and acetyl transacylase activities. Its substrate specificity determines the biosynthesis of branched-chain and/or straight-chain of fatty acids. The sequence is that of Beta-ketoacyl-[acyl-carrier-protein] synthase III from Sphingopyxis alaskensis (strain DSM 13593 / LMG 18877 / RB2256) (Sphingomonas alaskensis).